A 130-amino-acid chain; its full sequence is Large-conductance mechanosensitive channel (130 aa).

2 consecutive transmembrane segments (helical) span residues 11–31 (FALK…AAFG) and 70–90 (GAFI…FIFV).

Belongs to the MscL family. In terms of assembly, homopentamer.

The protein resides in the cell membrane. Channel that opens in response to stretch forces in the membrane lipid bilayer. May participate in the regulation of osmotic pressure changes within the cell. The sequence is that of Large-conductance mechanosensitive channel from Listeria welshimeri serovar 6b (strain ATCC 35897 / DSM 20650 / CCUG 15529 / CIP 8149 / NCTC 11857 / SLCC 5334 / V8).